Reading from the N-terminus, the 514-residue chain is Maturase K (514 aa).

This sequence belongs to the intron maturase 2 family. MatK subfamily.

The protein localises to the plastid. The protein resides in the chloroplast. Usually encoded in the trnK tRNA gene intron. Probably assists in splicing its own and other chloroplast group II introns. The chain is Maturase K from Acer monspessulanum (Montpellier maple).